The following is a 345-amino-acid chain: Phosphoribosylformylglycinamidine cyclo-ligase (345 aa).

It belongs to the AIR synthase family.

The protein resides in the cytoplasm. The catalysed reaction is 2-formamido-N(1)-(5-O-phospho-beta-D-ribosyl)acetamidine + ATP = 5-amino-1-(5-phospho-beta-D-ribosyl)imidazole + ADP + phosphate + H(+). It participates in purine metabolism; IMP biosynthesis via de novo pathway; 5-amino-1-(5-phospho-D-ribosyl)imidazole from N(2)-formyl-N(1)-(5-phospho-D-ribosyl)glycinamide: step 2/2. The chain is Phosphoribosylformylglycinamidine cyclo-ligase from Escherichia coli O7:K1 (strain IAI39 / ExPEC).